The primary structure comprises 573 residues: 60 kDa heat shock protein, mitochondrial (573 aa).

A mitochondrion-targeting transit peptide spans 1-26; the sequence is MLRLPTVLRQMRPVSRALAPHLTRAY. Lys31 bears the N6-succinyllysine mark. A phosphoserine mark is found at Ser67 and Ser70. Lys75 contacts ATP. Lys75 is modified (N6-acetyllysine). The residue at position 82 (Lys82) is an N6-acetyllysine; alternate. N6-succinyllysine; alternate is present on Lys82. Position 87 is an N6-acetyllysine (Lys87). Position 90 is a phosphotyrosine (Tyr90). Lys91 bears the N6-acetyllysine mark. ATP is bound at residue 111-115; sequence DGTTT. Lys125 carries the post-translational modification N6-acetyllysine; alternate. Lys125 carries the N6-succinyllysine; alternate modification. Lys130 is modified (N6-acetyllysine). An N6-acetyllysine; alternate modification is found at Lys133. Lys133 bears the N6-succinyllysine; alternate mark. Position 133 is an N6-malonyllysine; alternate (Lys133). Lys156 carries the post-translational modification N6-acetyllysine. An N6-acetyllysine; alternate mark is found at Lys191, Lys202, Lys205, Lys218, and Lys236. N6-succinyllysine; alternate occurs at positions 191, 202, 205, 218, and 236. Lys249 bears the N6-acetyllysine mark. Lys250 carries the post-translational modification N6-acetyllysine; alternate. Lys250 carries the N6-succinyllysine; alternate modification. An N6-acetyllysine mark is found at Lys269 and Lys292. Position 301 is an N6-succinyllysine (Lys301). At Lys314 the chain carries N6-acetyllysine. Residue Lys352 is modified to N6-acetyllysine; alternate. The residue at position 352 (Lys352) is an N6-succinyllysine; alternate. Lys359 and Lys389 each carry N6-acetyllysine. Residue Lys396 is modified to N6-acetyllysine; alternate. Lys396 is modified (N6-succinyllysine; alternate). Residue Ser410 is modified to Phosphoserine. ATP is bound at residue Gly440. Lys455 carries the post-translational modification N6-acetyllysine; alternate. Lys455 carries the N6-succinyllysine; alternate modification. N6-acetyllysine is present on Lys469. Lys481 is subject to N6-acetyllysine; alternate. Lys481 bears the N6-succinyllysine; alternate mark. Residue Ser488 is modified to Phosphoserine. Asp520 lines the ATP pocket. Residue Lys551 forms a Glycyl lysine isopeptide (Lys-Gly) (interchain with G-Cter in SUMO2) linkage.

The protein belongs to the chaperonin (HSP60) family. As to quaternary structure, homoheptamer arranged in a ring structure. The functional units of these chaperonins consist of heptameric rings of the large subunit Hsp60, which function as a back-to-back double ring. Interacts with 2 heptameric Hsp10 rings to form the symmetrical football complex. Interacts with HRAS. Interacts with ATAD3A. Interacts with ETFBKMT and EEF1AKMT3. Interacts with MFHAS1.

It is found in the mitochondrion matrix. It catalyses the reaction ATP + H2O + a folded polypeptide = ADP + phosphate + an unfolded polypeptide.. Chaperonin implicated in mitochondrial protein import and macromolecular assembly. Together with Hsp10, facilitates the correct folding of imported proteins. May also prevent misfolding and promote the refolding and proper assembly of unfolded polypeptides generated under stress conditions in the mitochondrial matrix. The functional units of these chaperonins consist of heptameric rings of the large subunit Hsp60, which function as a back-to-back double ring. In a cyclic reaction, Hsp60 ring complexes bind one unfolded substrate protein per ring, followed by the binding of ATP and association with 2 heptameric rings of the co-chaperonin Hsp10. This leads to sequestration of the substrate protein in the inner cavity of Hsp60 where, for a certain period of time, it can fold undisturbed by other cell components. Synchronous hydrolysis of ATP in all Hsp60 subunits results in the dissociation of the chaperonin rings and the release of ADP and the folded substrate protein. The protein is 60 kDa heat shock protein, mitochondrial (Hspd1) of Rattus norvegicus (Rat).